A 513-amino-acid polypeptide reads, in one-letter code: GMP synthase [glutamine-hydrolyzing] (513 aa).

One can recognise a Glutamine amidotransferase type-1 domain in the interval 9–198; that stretch reads LILVLDFGSQ…VRRVCDCRGQ (190 aa). Cys86 functions as the Nucleophile in the catalytic mechanism. Active-site residues include His172 and Glu174. In terms of domain architecture, GMPS ATP-PPase spans 199-388; sequence WTMENFIEIE…LGIPEHLVWR (190 aa). 226-232 lines the ATP pocket; it reads SGGVDSS.

Homodimer.

It carries out the reaction XMP + L-glutamine + ATP + H2O = GMP + L-glutamate + AMP + diphosphate + 2 H(+). Its pathway is purine metabolism; GMP biosynthesis; GMP from XMP (L-Gln route): step 1/1. Its function is as follows. Catalyzes the synthesis of GMP from XMP. This is GMP synthase [glutamine-hydrolyzing] from Staphylococcus aureus (strain USA300).